The sequence spans 194 residues: dITP/XTP pyrophosphatase (194 aa).

8–13 (TKNKGK) contacts substrate. Mg(2+)-binding residues include Glu-41 and Asp-70. Residue Asp-70 is the Proton acceptor of the active site. Substrate-binding positions include Ser-71, 153–156 (FGYD), Lys-176, and 181–182 (HR).

It belongs to the HAM1 NTPase family. As to quaternary structure, homodimer. The cofactor is Mg(2+).

It catalyses the reaction XTP + H2O = XMP + diphosphate + H(+). The enzyme catalyses dITP + H2O = dIMP + diphosphate + H(+). The catalysed reaction is ITP + H2O = IMP + diphosphate + H(+). Pyrophosphatase that catalyzes the hydrolysis of nucleoside triphosphates to their monophosphate derivatives, with a high preference for the non-canonical purine nucleotides XTP (xanthosine triphosphate), dITP (deoxyinosine triphosphate) and ITP. Seems to function as a house-cleaning enzyme that removes non-canonical purine nucleotides from the nucleotide pool, thus preventing their incorporation into DNA/RNA and avoiding chromosomal lesions. The chain is dITP/XTP pyrophosphatase from Halalkalibacterium halodurans (strain ATCC BAA-125 / DSM 18197 / FERM 7344 / JCM 9153 / C-125) (Bacillus halodurans).